Consider the following 106-residue polypeptide: UPF0145 protein MA_3383 (106 aa).

The protein belongs to the UPF0145 family.

The polypeptide is UPF0145 protein MA_3383 (Methanosarcina acetivorans (strain ATCC 35395 / DSM 2834 / JCM 12185 / C2A)).